A 188-amino-acid polypeptide reads, in one-letter code: CMT1A duplicated region transcript 15 protein (188 aa).

In terms of tissue distribution, expressed in fetal heart, kidney, liver, lung and spleen.

In Homo sapiens (Human), this protein is CMT1A duplicated region transcript 15 protein (CDRT15).